A 134-amino-acid polypeptide reads, in one-letter code: Ribosome-binding factor A (134 aa).

It belongs to the RbfA family. As to quaternary structure, monomer. Binds 30S ribosomal subunits, but not 50S ribosomal subunits or 70S ribosomes.

It localises to the cytoplasm. Its function is as follows. One of several proteins that assist in the late maturation steps of the functional core of the 30S ribosomal subunit. Associates with free 30S ribosomal subunits (but not with 30S subunits that are part of 70S ribosomes or polysomes). Required for efficient processing of 16S rRNA. May interact with the 5'-terminal helix region of 16S rRNA. The sequence is that of Ribosome-binding factor A from Rhizobium etli (strain CIAT 652).